The primary structure comprises 819 residues: MSNIQNMSLEDIMGERFGRYSKYIIQERALPDIRDGLKPVQRRILYSMNKDGNTFEKGYRKSAKSVGNIMGNFHPHGDASIYDAMVRMSQDWKNREILVEMHGNNGSMDGDPPAAMRYTEARLSEIAGYLLQDIEKNTVSFAWNFDDTEKEPTVLPAAFPNLLVNGSSGISAGYATDIPPHNLSEVIDAVVYMIDHPKASLEKLMEFLPGPDFPTGGIIQGADEIKKAYETGKGRVVVRSRTEIEELKGGKQQIIVTEIPYEVNKAVLVKKIDDVRVNNKVPGIVEVRDESDRTGLRIAIELKKEADSQTILNYLLKYTDLQVNYNFNMVAIDHFTPRQVGLQKILSSYISHRKDIIIERSKFDKAKAEKRLHIVEGLIRVLSILDEIIALIRSSDNKADAKENLKVSYDFSEEQAEAIVTLQLYRLTNTDIVTLQNEENDLRDLITTLSAIIGDEATMYNVMKRELREVKKKFANPRLSELQAESQIIEIDTASLIAEEETFVSVTRGGYLKRTSPRSFNASSLEEVGKRDDDELIFVKQAKTTEHLLLFTTLGNVIYRPIHELTDLRWKDIGEHLSQTISNFATEEEILYADIVTSFDQGLYVAVTQNGFIKRFDRKELSPWRTYKSKSTKYVKLKDDKDRVVTLSPVIMEDLLLVTKNGYALRFSSQEVPIQGLKSAGVKGINLKNDDSLASAFAVTSNSFFVLTQRGSLKRMAVDDIPQTSRANRGLLVLRELKTKPHRVFLAGGVQSDASAEQFDLFTDIPEEETNQQMLEVISKTGQTYEIALETLSLSERTSNGSFISDTISDQEVLVARTR.

Residues leucine 30–leucine 496 enclose the Topo IIA-type catalytic domain. Tyrosine 118 (O-(5'-phospho-DNA)-tyrosine intermediate) is an active-site residue.

Belongs to the type II topoisomerase GyrA/ParC subunit family. ParC type 2 subfamily. As to quaternary structure, heterotetramer composed of ParC and ParE.

The protein localises to the cell membrane. The catalysed reaction is ATP-dependent breakage, passage and rejoining of double-stranded DNA.. Topoisomerase IV is essential for chromosome segregation. It relaxes supercoiled DNA. Performs the decatenation events required during the replication of a circular DNA molecule. The chain is DNA topoisomerase 4 subunit A from Streptococcus pyogenes serotype M6 (strain ATCC BAA-946 / MGAS10394).